Consider the following 156-residue polypeptide: Ribosomal RNA large subunit methyltransferase H (156 aa).

S-adenosyl-L-methionine-binding positions include L73, G104, and 123–128; that span reads IGPLTL.

This sequence belongs to the RNA methyltransferase RlmH family. In terms of assembly, homodimer.

Its subcellular location is the cytoplasm. It catalyses the reaction pseudouridine(1915) in 23S rRNA + S-adenosyl-L-methionine = N(3)-methylpseudouridine(1915) in 23S rRNA + S-adenosyl-L-homocysteine + H(+). Its function is as follows. Specifically methylates the pseudouridine at position 1915 (m3Psi1915) in 23S rRNA. This chain is Ribosomal RNA large subunit methyltransferase H, found in Xanthomonas campestris pv. campestris (strain 8004).